Reading from the N-terminus, the 315-residue chain is Archaeosortase A (315 aa).

The next 7 helical transmembrane spans lie at 12 to 32, 47 to 67, 74 to 94, 173 to 193, 204 to 224, 227 to 247, and 260 to 280; these read VIPY…AGVA, AGAW…FAFV, TVLI…VFAG, VVFE…IAAV, IALS…FIAL, GYQW…FGLT, and VLAQ…IARW. The active-site Acyl-thioester intermediate is the C177. Catalysis depends on R218, which acts as the Proton donor.

It belongs to the exosortase/archaeosortase family. Archaeosortase A subfamily.

The protein resides in the cell membrane. Functionally, transpeptidase that recognizes and modifies its substrate by proteolytic cleavage of a sorting signal. Following cleavage, a covalent intermediate is formed via a thioester bond between the archaeosortase and its substrate, which is then transferred and covalently attached to the cell membrane. In Natronomonas pharaonis (strain ATCC 35678 / DSM 2160 / CIP 103997 / JCM 8858 / NBRC 14720 / NCIMB 2260 / Gabara) (Halobacterium pharaonis), this protein is Archaeosortase A.